Reading from the N-terminus, the 140-residue chain is UPF0132 membrane protein MJ1527 (140 aa).

Helical transmembrane passes span 40–60 (MEGV…LLLE), 70–90 (AMQS…VSAI), and 92–112 (IIGW…WIVG).

This sequence belongs to the UPF0132 family.

It localises to the cell membrane. This Methanocaldococcus jannaschii (strain ATCC 43067 / DSM 2661 / JAL-1 / JCM 10045 / NBRC 100440) (Methanococcus jannaschii) protein is UPF0132 membrane protein MJ1527.